The following is a 510-amino-acid chain: GMP synthase [glutamine-hydrolyzing] (510 aa).

A Glutamine amidotransferase type-1 domain is found at 5–195; that stretch reads LVIVLDFGGQ…LFNIADLSAD (191 aa). Cys-82 acts as the Nucleophile in catalysis. Residues His-169 and Glu-171 contribute to the active site. One can recognise a GMPS ATP-PPase domain in the interval 196–385; that stretch reads WTMGSYIEET…LGLHREIVER (190 aa). ATP is bound at residue 223–229; it reads SGGIDST.

Homodimer.

The enzyme catalyses XMP + L-glutamine + ATP + H2O = GMP + L-glutamate + AMP + diphosphate + 2 H(+). It participates in purine metabolism; GMP biosynthesis; GMP from XMP (L-Gln route): step 1/1. Catalyzes the synthesis of GMP from XMP. In Natranaerobius thermophilus (strain ATCC BAA-1301 / DSM 18059 / JW/NM-WN-LF), this protein is GMP synthase [glutamine-hydrolyzing].